We begin with the raw amino-acid sequence, 492 residues long: MSLKLHNTLGNKKEEFIPIHEGKAGVYGCGPTVYDYAHIGNLRTYVFQDILVKTLRFLGYDVTHVMNITDVGHLTDDEDSGEDKMVKSAEERGKSVLEIAEFYTKAFFNDTERLNIERPGIVCKATEHINEMIELIKRIEANGHTYMAGGNLYYDISTFPKYGELANINLEDLKAGARIEIDKNKRNPHDFVLWFTKSKFENQALVWDSPWGRGYPGWHIECSAMSMKYLGEQIDIHKGGIDHIRVHHTNEIAQSEGATGKKWVNYWLHNEFLVMNKGKMSKSAGSFIILEDVINKGFSALDYRFLLLGGHYRSQLTFSWEAMETAKNGRKNLNNRVAKWLDGLSDSEIMEYAALTENLNLKSAKDMIKNEKARSCFDNFIAAMEDDLSTPKALSELQLLIKEKDIPQKDVLTVLAAMDSILGIKLIEESFNTLKDKGSIEIDESEILKLIEERASAKLDKNYKLADEIRDKLKGMGIILEDQAGKTTWKKL.

Residue cysteine 29 participates in Zn(2+) binding. A 'HIGH' region motif is present at residues 31–41 (PTVYDYAHIGN). The Zn(2+) site is built by cysteine 222, histidine 247, and glutamate 251. A 'KMSKS' region motif is present at residues 279 to 283 (KMSKS). Lysine 282 contributes to the ATP binding site.

It belongs to the class-I aminoacyl-tRNA synthetase family. As to quaternary structure, monomer. It depends on Zn(2+) as a cofactor.

Its subcellular location is the cytoplasm. It carries out the reaction tRNA(Cys) + L-cysteine + ATP = L-cysteinyl-tRNA(Cys) + AMP + diphosphate. The sequence is that of Cysteine--tRNA ligase from Treponema denticola (strain ATCC 35405 / DSM 14222 / CIP 103919 / JCM 8153 / KCTC 15104).